Here is a 914-residue protein sequence, read N- to C-terminus: DENN domain-containing protein 2C (914 aa).

The interval 46–98 is disordered; the sequence is FGVRYNCHQESPPHKRPTGEERNGALPRNTDVKSRDQSEDEGEGGECRGSHPS. Positions 56-68 are enriched in basic and acidic residues; the sequence is SPPHKRPTGEERN. At serine 261 the chain carries Phosphoserine. The interval 411–446 is disordered; the sequence is GKKRVKLQPYTGKEAPSSKGETSGNESDAEYLPKNR. One can recognise a uDENN domain in the interval 480–627; that stretch reads ELFVVVSLQK…PFPAPGRTIT (148 aa). The cDENN domain occupies 649-782; the sequence is RLEHVDFECL…LQAALVQILE (134 aa). Positions 784–874 constitute a dDENN domain; the sequence is RDEVLAQEQQ…QDRELRQSGV (91 aa).

Guanine nucleotide exchange factor (GEF) which may activate RAB9A and RAB9B. Promotes the exchange of GDP to GTP, converting inactive GDP-bound Rab proteins into their active GTP-bound form. The chain is DENN domain-containing protein 2C (Dennd2c) from Mus musculus (Mouse).